The primary structure comprises 158 residues: Urease accessory protein UreE (158 aa).

The protein belongs to the UreE family.

Its subcellular location is the cytoplasm. Its function is as follows. Involved in urease metallocenter assembly. Binds nickel. Probably functions as a nickel donor during metallocenter assembly. This is Urease accessory protein UreE from Klebsiella pneumoniae subsp. pneumoniae (strain ATCC 700721 / MGH 78578).